The primary structure comprises 100 residues: MQTAPREYSTSGPTAVLAPTTNTQHYAPYSLYRFLSSHKLDLLLGIALLVFLYVITAAPKEVCQVVITGESVVIRNCQQPDRILANLNLSPWNGVKFPLL.

At 1-41 the chain is on the lumenal side; the sequence is MQTAPREYSTSGPTAVLAPTTNTQHYAPYSLYRFLSSHKLD. A helical transmembrane segment spans residues 42–59; the sequence is LLLGIALLVFLYVITAAP. The Cytoplasmic segment spans residues 60 to 100; that stretch reads KEVCQVVITGESVVIRNCQQPDRILANLNLSPWNGVKFPLL.

It belongs to the Tymovirales TGBp3 protein family.

It localises to the host endoplasmic reticulum membrane. Functionally, plays a role in viral cell-to-cell propagation, by facilitating genome transport to neighboring plant cells through plasmosdesmata. May induce the formation of granular vesicles derived from the Endoplasmic reticulum, which align on actin filaments. The polypeptide is Movement protein TGBp3 (Narcissus mosaic virus (NMV)).